The sequence spans 663 residues: Rho GTPase-activating protein 18 (663 aa).

Residues 15 to 37 (YHPSGKDQTVGNSHAKAGEEATS) form a disordered region. A phosphoserine mark is found at Ser-66 and Ser-69. Thr-158 carries the phosphothreonine modification. 2 disordered regions span residues 179 to 227 (RESK…PAPE) and 243 to 277 (QKES…TRIG). 2 stretches are compositionally biased toward basic and acidic residues: residues 197 to 219 (NENK…KLIP) and 245 to 258 (ESSK…KGDD). Position 263 is a phosphoserine (Ser-263). One can recognise a Rho-GAP domain in the interval 324–523 (VPLTALLEQD…LLIKYQKLLW (200 aa)). Ser-610 carries the post-translational modification Phosphoserine.

In terms of assembly, interacts with MPHOSPH6.

The protein resides in the cytoplasm. Rho GTPase activating protein that suppresses F-actin polymerization by inhibiting Rho. Rho GTPase activating proteins act by converting Rho-type GTPases to an inactive GDP-bound state. Plays a key role in tissue tension and 3D tissue shape by regulating cortical actomyosin network formation. Acts downstream of YAP1 and inhibits actin polymerization, which in turn reduces nuclear localization of YAP1. Regulates cell shape, spreading, and migration. In Homo sapiens (Human), this protein is Rho GTPase-activating protein 18.